The sequence spans 401 residues: Nicotinamide/nicotinic acid mononucleotide adenylyltransferase 1 (401 aa).

Disordered stretches follow at residues M1–K30 and A48–Q123. A compositionally biased stretch (basic residues) spans I52 to R69. 4 positions are modified to phosphoserine: S91, S95, S96, and S111. Positions 173 and 174 each coordinate NAD(+). H181 provides a ligand contact to ATP. NAD(+)-binding residues include T253, G288, D290, W301, R320, and N351. T356–R359 is an ATP binding site.

It belongs to the eukaryotic NMN adenylyltransferase family. In terms of assembly, homotetramer. Ni(2+) serves as cofactor.

The protein resides in the cytoplasm. It localises to the nucleus. It catalyses the reaction beta-nicotinamide D-ribonucleotide + ATP + H(+) = diphosphate + NAD(+). The enzyme catalyses nicotinate beta-D-ribonucleotide + ATP + H(+) = deamido-NAD(+) + diphosphate. It functions in the pathway cofactor biosynthesis; NAD(+) biosynthesis; deamido-NAD(+) from nicotinate D-ribonucleotide: step 1/1. The protein operates within cofactor biosynthesis; NAD(+) biosynthesis; NAD(+) from nicotinamide D-ribonucleotide: step 1/1. Its function is as follows. Catalyzes the formation of NAD(+) from nicotinamide mononucleotide (NMN) and ATP. Can also use the deamidated form; nicotinic acid mononucleotide (NaMN) as substrate to form deamido-NAD(+) (NaAD). Key enzyme in both de novo and salvage pathways for NAD(+) biosynthesis. Predominantly acts in the salvage pathways via NMN. This Saccharomyces cerevisiae (strain ATCC 204508 / S288c) (Baker's yeast) protein is Nicotinamide/nicotinic acid mononucleotide adenylyltransferase 1.